Consider the following 425-residue polypeptide: GTPase Obg (425 aa).

The region spanning Met-1 to Ile-158 is the Obg domain. Residues Ala-159–Lys-330 form the OBG-type G domain. GTP-binding positions include Gly-165–Ser-172, Phe-190–Val-194, Asp-212–Gly-215, Asn-282–Asp-285, and Ser-311–Ala-313. Ser-172 and Thr-192 together coordinate Mg(2+). The OCT domain maps to Tyr-348–Arg-425.

It belongs to the TRAFAC class OBG-HflX-like GTPase superfamily. OBG GTPase family. Monomer. Requires Mg(2+) as cofactor.

Its subcellular location is the cytoplasm. An essential GTPase which binds GTP, GDP and possibly (p)ppGpp with moderate affinity, with high nucleotide exchange rates and a fairly low GTP hydrolysis rate. Plays a role in control of the cell cycle, stress response, ribosome biogenesis and in those bacteria that undergo differentiation, in morphogenesis control. The sequence is that of GTPase Obg from Ruminiclostridium cellulolyticum (strain ATCC 35319 / DSM 5812 / JCM 6584 / H10) (Clostridium cellulolyticum).